We begin with the raw amino-acid sequence, 276 residues long: MTTKELFDRICRKRSFLCVGLDTDVKKIPPHLLNEDDPILAFNKAIIDATAEYCVAFKPNMAFYESMGSFGAHSFEKTIEYIRERYPDQFIIADAKRGDIGNTSDMYARSFFEHLKVDALTVSPYMGEDSISPFLSYAGKFTVLLALTSNKGSQDFQMMRDADGEYLFERVIRISQTWDNAGQLMYVVGATQASMLKDIREIVPDAFLLVPGVGAQGGSLEDVAEYGMNAHCGLLVNASRSIIYADNTEGFAAKAAGEAAAMQRQMEIALRAKGLI.

The active-site Proton donor is the Lys-96.

This sequence belongs to the OMP decarboxylase family. Type 2 subfamily.

It catalyses the reaction orotidine 5'-phosphate + H(+) = UMP + CO2. The protein operates within pyrimidine metabolism; UMP biosynthesis via de novo pathway; UMP from orotate: step 2/2. This chain is Orotidine 5'-phosphate decarboxylase, found in Porphyromonas gingivalis (strain ATCC 33277 / DSM 20709 / CIP 103683 / JCM 12257 / NCTC 11834 / 2561).